The following is a 29-amino-acid chain: Cyclotide vibi-A (29 aa).

The cyclopeptide (Gly-Asn) cross-link spans 1–29; sequence GLPVCGETCFGGTCNTPGCSCSYPICTRN. Intrachain disulfides connect Cys-5–Cys-19, Cys-9–Cys-21, and Cys-14–Cys-26.

This is a cyclic peptide.

Probably participates in a plant defense mechanism. This is Cyclotide vibi-A from Viola biflora (Yellow wood violet).